Here is a 36-residue protein sequence, read N- to C-terminus: Hemoglobin subunit beta (36 aa).

A Globin domain is found at 1-36 (VCVLAHHFGKEFTPQVQAAYQKVVAGVANALAHKYH). Lysine 34 is modified (N6-acetyllysine).

The protein belongs to the globin family. Heterotetramer of two alpha chains and two beta chains. In terms of tissue distribution, red blood cells.

Its function is as follows. Involved in oxygen transport from the lung to the various peripheral tissues. The polypeptide is Hemoglobin subunit beta (HBB) (Pongo pygmaeus (Bornean orangutan)).